Here is a 396-residue protein sequence, read N- to C-terminus: THAP domain-containing protein 5 (396 aa).

The segment at 2–85 (MPRYCAAICC…LKQTAVPTIF (84 aa)) adopts a THAP-type zinc-finger fold. The segment at 86–113 (SLPEDNQGKDPSKKKSQKKNLEDEKEVC) is disordered. Positions 91 to 113 (NQGKDPSKKKSQKKNLEDEKEVC) are enriched in basic and acidic residues. The HCFC1-binding motif (HBM) signature appears at 322 to 325 (EHSY). A coiled-coil region spans residues 349–382 (LELKEQQTLGRLKSLEALVRQLKQENWLSEENVK).

As to quaternary structure, interacts with HTRA2; under apoptotic conditions. Interacts with ABRAXAS2. In terms of processing, cleaved by HTRA2 during apoptosis.

Its subcellular location is the nucleus. Its function is as follows. Has sequence-specific DNA-binding activity and can function as transcriptional repressor (in vitro). May be a regulator of cell cycle: THAP5 overexpression in human cell lines causes cell cycle arrest at G2/M phase. This Macaca fascicularis (Crab-eating macaque) protein is THAP domain-containing protein 5 (THAP5).